The following is a 150-amino-acid chain: MCLMLLLLLNLEATVKAAVLIPQSSVCPNAEANNFLQNVKVNLKVINSLSSKASSRRPSDYLNRSTSPWTLSRNEDPDRYPSVIWEAQCRHQRCVNAEGKLDHHMNSVLIQQEILVLKREPEKCPFTFRVEKMLVGVGCTCVSSIVRHAS.

An N-terminal signal peptide occupies residues 1-17 (MCLMLLLLLNLEATVKA). Residues 54–75 (SSRRPSDYLNRSTSPWTLSRNE) form a disordered region. The segment covering 62 to 72 (LNRSTSPWTLS) has biased composition (polar residues). N-linked (GlcNAc...) asparagine glycosylation occurs at asparagine 63. Disulfide bonds link cysteine 89-cysteine 139 and cysteine 94-cysteine 141.

This sequence belongs to the IL-17 family. As to quaternary structure, homodimer. Forms complexes with IL17RA and IL17RC receptors with 2:1 binding stoichiometry: two receptor chains for one interleukin molecule. IL17A homodimer preferentially drives the formation of IL17RA-IL17RC heterodimeric receptor complex. IL17A homodimer adopts an asymmetrical ternary structure with one IL17RA molecule, allowing for high affinity interactions of one IL17A monomer with one IL17RA molecule (via D1 and D2 domains), while disfavoring binding of a second IL17RA molecule on the other IL17A monomer. Heterodimer with IL17F. IL17A-IL17F forms complexes with IL17RA-IL17RC, but with lower affinity when compared to IL17A homodimer. IL17RA and IL17RC chains cannot distinguish between IL17A and IL17F molecules, potentially enabling the formation of topologically distinct complexes.

It is found in the secreted. Effector cytokine of innate and adaptive immune system involved in antimicrobial host defense and maintenance of tissue integrity. Signals via IL17RA-IL17RC heterodimeric receptor complex, triggering homotypic interaction of IL17RA and IL17RC chains with TRAF3IP2 adapter. This leads to downstream TRAF6-mediated activation of NF-kappa-B and MAPkinase pathways ultimately resulting in transcriptional activation of cytokines, chemokines, antimicrobial peptides and matrix metalloproteinases, with potential strong immune inflammation. Plays an important role in connecting T cell-mediated adaptive immunity and acute inflammatory response to destroy extracellular bacteria and fungi. As a signature effector cytokine of T-helper 17 cells (Th17), primarily induces neutrophil activation and recruitment at infection and inflammatory sites. In airway epithelium, mediates neutrophil chemotaxis via induction of CXCL1 and CXCL5 chemokines. In secondary lymphoid organs, contributes to germinal center formation by regulating the chemotactic response of B cells to CXCL12 and CXCL13, enhancing retention of B cells within the germinal centers, B cell somatic hypermutation rate and selection toward plasma cells. Effector cytokine of a subset of gamma-delta T cells that functions as part of an inflammatory circuit downstream IL1B, TLR2 and IL23A-IL12B to promote neutrophil recruitment for efficient bacterial clearance. Effector cytokine of innate immune cells including invariant natural killer cell (iNKT) and group 3 innate lymphoid cells that mediate initial neutrophilic inflammation. Involved in the maintenance of the integrity of epithelial barriers during homeostasis and pathogen infection. Upon acute injury, has a direct role in epithelial barrier formation by regulating OCLN localization and tight junction biogenesis. As part of the mucosal immune response induced by commensal bacteria, enhances host's ability to resist pathogenic bacterial and fungal infections by promoting neutrophil recruitment and antimicrobial peptides release. In synergy with IL17F, mediates the production of antimicrobial beta-defensins DEFB1, DEFB103A, and DEFB104A by mucosal epithelial cells, limiting the entry of microbes through the epithelial barriers. Involved in antiviral host defense through various mechanisms. The chain is Interleukin-17A (Il17a) from Rattus norvegicus (Rat).